Here is a 1003-residue protein sequence, read N- to C-terminus: X-linked retinitis pigmentosa GTPase regulator (1003 aa).

RCC1 repeat units follow at residues 54–105 (NKLY…STEG), 106–158 (GKVY…LTED), 159–208 (GELF…VTTE), 209–261 (GQLY…LTEK), 262–313 (AVYT…ITDM), and 314–367 (GLMY…FATP). Ser418 carries the post-translational modification Phosphoserine. A disordered region spans residues 460–495 (TPEKEGLTQPEPDYFRDNMAKGKETDNSSATDSESL). The span at 472 to 485 (DYFRDNMAKGKETD) shows a compositional bias: basic and acidic residues. Positions 486 to 495 (NSSATDSESL) are enriched in polar residues. Phosphoserine is present on Ser520. 4 disordered regions span residues 625–657 (FKAI…LAEM), 691–760 (ESKD…TDQN), 794–932 (LSEI…DVKK), and 968–1003 (AFKG…CTIL). Residues 693–715 (KDFVKDSRRNKQDVIFDSERESI) show a composition bias toward basic and acidic residues. 2 stretches are compositionally biased toward acidic residues: residues 716–726 (EEPDSYLEGES) and 797–821 (IPEE…EANE). Positions 827–848 (AGKEEKEIEILSDDLTDRAEDH) are enriched in basic and acidic residues. Over residues 849–867 (EFSEDEEPEDMAEELDEDL) the composition is skewed to acidic residues. Residues 882–896 (SLKKDETTKQEKRAI) show a composition bias toward basic and acidic residues. The span at 913–924 (SSSSEVLNDSES) shows a compositional bias: low complexity. Polar residues predominate over residues 978–989 (QNHMGQNHQDTS). Cys1000 carries the post-translational modification Cysteine methyl ester. Residue Cys1000 is the site of S-geranylgeranyl cysteine attachment. Positions 1001–1003 (TIL) are cleaved as a propeptide — removed in mature form.

As to quaternary structure, interacts with PDE6D. Interacts with RPGRIP1. Interacts with RPGRIP1L. PDE6D, RPGRIP1 and RPGRIP1L may compete for the same binding sites. Interacts with NPM1. Interacts with SMC1A and SMC3. Interacts with CEP290. Interacts with WHRN. Interacts with SPATA7. Interacts with RAB37 and RAB8A (in GDP-bound forms); functions as GEF for RAB37 and RAB8A. Prenylated. Isoform 1 is expressed exclusively in testis. Isoforms 2, 3 and 4 are widely expressed.

The protein resides in the golgi apparatus. Its subcellular location is the cell projection. The protein localises to the cilium. It is found in the cytoplasm. It localises to the cytoskeleton. The protein resides in the cilium basal body. Its subcellular location is the microtubule organizing center. The protein localises to the centrosome. It is found in the cilium axoneme. It localises to the flagellum axoneme. Its function is as follows. Acts as a guanine-nucleotide releasing factor (GEF) for RAB8A and RAB37 by promoting the conversion of inactive RAB-GDP to the active form RAB-GTP. GEF activity towards RAB8A may facilitate ciliary trafficking by modulating ciliary intracellular localization of RAB8A. GEF activity towards RAB37 maintains autophagic homeostasis and retinal function. Involved in photoreceptor integrity. May control cilia formation by regulating actin stress filaments and cell contractility. May be involved in microtubule organization and regulation of transport in primary cilia. May play a critical role in spermatogenesis and in intraflagellar transport processes. The protein is X-linked retinitis pigmentosa GTPase regulator (RPGR) of Canis lupus familiaris (Dog).